A 314-amino-acid chain; its full sequence is Three-prime repair exonuclease 1 (314 aa).

2 residues coordinate Mg(2+): D18 and E20. 20–21 (EA) lines the substrate pocket. S78 is subject to Phosphoserine. Y129 contributes to the substrate binding site. A Phosphoserine modification is found at S167. Catalysis depends on H195, which acts as the Proton donor/acceptor. D200 lines the Mg(2+) pocket. D200 is a binding site for substrate. Positions 236-314 (TASARTKPRP…YGLSLATPGE (79 aa)) are necessary for endoplasmic reticulum localization. The tract at residues 240–278 (RTKPRPSAVTTTAHLATTRNTSPSLGESRGTKDLPPVKD) is disordered. Residues 243 to 314 (PRPSAVTTTA…YGLSLATPGE (72 aa)) are interaction with UBQLN1. Over residues 247 to 260 (AVTTTAHLATTRNT) the composition is skewed to low complexity. Residue S261 is modified to Phosphoserine. The interval 281 to 314 (ALSREGLLAPLGLLAILTLAVATLYGLSLATPGE) is necessary for cytoplasmic retention.

It belongs to the exonuclease superfamily. TREX family. As to quaternary structure, homodimer. Interacts (via proline-rich region) with TCERG1/CA150 (via the second WW domain). Component of the SET complex, composed of at least ANP32A, APEX1, HMGB2, NME1, SET and TREX1. Within this complex, directly interacts with SET; this interaction does not result in TREX1 inhibition. Also interacts with NME1, but only following translocation to the nucleus. Directly interacts with UBQLN1 (via ubiquitin-like domain); the interaction may control TREX1 subcellular location. It depends on Mg(2+) as a cofactor. In terms of processing, ubiquitinated, but not targeted to proteasomal degradation. Ubiquitination may be important for interaction with UBQLN1. As to expression, detected in thymus, spleen, liver, brain, heart, small intestine and colon.

Its subcellular location is the nucleus. The protein localises to the cytoplasm. It localises to the cytosol. The protein resides in the endoplasmic reticulum membrane. The enzyme catalyses Exonucleolytic cleavage in the 3'- to 5'-direction to yield nucleoside 5'-phosphates.. Functionally, major cellular 3'-to-5' DNA exonuclease which digests single-stranded DNA (ssDNA) and double-stranded DNA (dsDNA) with mismatched 3' termini. Prevents cell-intrinsic initiation of autoimmunity. Acts by metabolizing DNA fragments from endogenous retroelements, including L1, LTR and SINE elements. Plays a key role in degradation of DNA fragments at cytosolic micronuclei arising from genome instability: its association with the endoplasmic reticulum membrane directs TREX1 to ruptured micronuclei, leading to micronuclear DNA degradation. Micronuclear DNA degradation is required to limit CGAS activation and subsequent inflammation. Unless degraded, these DNA fragments accumulate in the cytosol and activate the cGAS-STING innate immune signaling, leading to the production of type I interferon. Prevents chronic ATM-dependent checkpoint activation, by processing ssDNA polynucleotide species arising from the processing of aberrant DNA replication intermediates. Inefficiently degrades oxidized DNA, such as that generated upon antimicrobial reactive oxygen production or upon absorption of UV light. During GZMA-mediated cell death, contributes to DNA damage in concert with NME1. NME1 nicks one strand of DNA and TREX1 removes bases from the free 3' end to enhance DNA damage and prevent DNA end reannealing and rapid repair. The protein is Three-prime repair exonuclease 1 of Homo sapiens (Human).